A 195-amino-acid chain; its full sequence is MSQRSAAIARTTKETDISLKLNIDGEGNTNIDTGVGFADHMLTLMSFWAGFDLDLKCKGDLEIDSHHTLEDIALVLGQVLSEAMGDKKGINRIGFAKVPMDEALVEVVIDLSGRAYLVYDDDILPPIIAGDERDVWREFFKSLAFKAGMNLHIKFEYGRNGHHLLEGAFKALGLAFRNALSVERQGVSSTKGSLD.

This sequence belongs to the imidazoleglycerol-phosphate dehydratase family.

It is found in the cytoplasm. It carries out the reaction D-erythro-1-(imidazol-4-yl)glycerol 3-phosphate = 3-(imidazol-4-yl)-2-oxopropyl phosphate + H2O. It functions in the pathway amino-acid biosynthesis; L-histidine biosynthesis; L-histidine from 5-phospho-alpha-D-ribose 1-diphosphate: step 6/9. This Maridesulfovibrio salexigens (strain ATCC 14822 / DSM 2638 / NCIMB 8403 / VKM B-1763) (Desulfovibrio salexigens) protein is Imidazoleglycerol-phosphate dehydratase.